A 466-amino-acid polypeptide reads, in one-letter code: GTP cyclohydrolase 1 (466 aa).

Cys-342, His-345, and Cys-416 together coordinate Zn(2+).

This sequence belongs to the GTP cyclohydrolase I family. As to quaternary structure, homodimer.

The catalysed reaction is GTP + H2O = 7,8-dihydroneopterin 3'-triphosphate + formate + H(+). Its pathway is cofactor biosynthesis; 7,8-dihydroneopterin triphosphate biosynthesis; 7,8-dihydroneopterin triphosphate from GTP: step 1/1. Functionally, GTP cyclohydrolase 1 is the first enzyme in the biosynthetic pathway leading to folic acid. In Arabidopsis thaliana (Mouse-ear cress), this protein is GTP cyclohydrolase 1 (GCH1).